Here is a 297-residue protein sequence, read N- to C-terminus: Acetylglutamate kinase (297 aa).

Residues 68–69, R90, and N195 contribute to the substrate site; that span reads GG.

The protein belongs to the acetylglutamate kinase family. ArgB subfamily.

It localises to the cytoplasm. The catalysed reaction is N-acetyl-L-glutamate + ATP = N-acetyl-L-glutamyl 5-phosphate + ADP. Its pathway is amino-acid biosynthesis; L-arginine biosynthesis; N(2)-acetyl-L-ornithine from L-glutamate: step 2/4. Functionally, catalyzes the ATP-dependent phosphorylation of N-acetyl-L-glutamate. This chain is Acetylglutamate kinase, found in Mesorhizobium japonicum (strain LMG 29417 / CECT 9101 / MAFF 303099) (Mesorhizobium loti (strain MAFF 303099)).